Here is a 580-residue protein sequence, read N- to C-terminus: Adenine deaminase (580 aa).

The protein belongs to the metallo-dependent hydrolases superfamily. Adenine deaminase family. The cofactor is Mn(2+).

It carries out the reaction adenine + H2O + H(+) = hypoxanthine + NH4(+). The protein is Adenine deaminase of Listeria monocytogenes serovar 1/2a (strain ATCC BAA-679 / EGD-e).